Consider the following 655-residue polypeptide: Acetyl-coenzyme A synthetase (655 aa).

Residues 196-199 and Thr-316 each bind CoA; that span reads RGGR. Residues 392-394, 416-421, Asp-508, and Arg-523 each bind ATP; these read GEP and DTWWQT. CoA is bound at residue Ser-531. Arg-534 contributes to the ATP binding site. The Mg(2+) site is built by Val-545, His-547, and Val-550. An N6-acetyllysine modification is found at Lys-620.

It belongs to the ATP-dependent AMP-binding enzyme family. Mg(2+) is required as a cofactor. Acetylated. Deacetylation by the SIR2-homolog deacetylase activates the enzyme.

It carries out the reaction acetate + ATP + CoA = acetyl-CoA + AMP + diphosphate. Catalyzes the conversion of acetate into acetyl-CoA (AcCoA), an essential intermediate at the junction of anabolic and catabolic pathways. AcsA undergoes a two-step reaction. In the first half reaction, AcsA combines acetate with ATP to form acetyl-adenylate (AcAMP) intermediate. In the second half reaction, it can then transfer the acetyl group from AcAMP to the sulfhydryl group of CoA, forming the product AcCoA. This Nitrosomonas europaea (strain ATCC 19718 / CIP 103999 / KCTC 2705 / NBRC 14298) protein is Acetyl-coenzyme A synthetase.